The sequence spans 201 residues: Recombination protein RecR (201 aa).

The C4-type zinc finger occupies 60-75; the sequence is CSECGNMDVSDPCTVC. In terms of domain architecture, Toprim spans 83 to 178; that stretch reads AAICVVETVG…SITSLARGVP (96 aa).

This sequence belongs to the RecR family.

Functionally, may play a role in DNA repair. It seems to be involved in an RecBC-independent recombinational process of DNA repair. It may act with RecF and RecO. The polypeptide is Recombination protein RecR (Maricaulis maris (strain MCS10) (Caulobacter maris)).